Consider the following 374-residue polypeptide: Probable dual-specificity RNA methyltransferase RlmN (374 aa).

Glu-108 serves as the catalytic Proton acceptor. Positions 114–361 (YSDRNTVCIS…SCTVRDTRGR (248 aa)) constitute a Radical SAM core domain. Cysteines 121 and 367 form a disulfide. Residues Cys-128, Cys-132, and Cys-135 each coordinate [4Fe-4S] cluster. S-adenosyl-L-methionine contacts are provided by residues 188–189 (GE), Ser-222, 245–247 (SLH), and Asn-324. Cys-367 functions as the S-methylcysteine intermediate in the catalytic mechanism.

This sequence belongs to the radical SAM superfamily. RlmN family. Requires [4Fe-4S] cluster as cofactor.

The protein localises to the cytoplasm. The catalysed reaction is adenosine(2503) in 23S rRNA + 2 reduced [2Fe-2S]-[ferredoxin] + 2 S-adenosyl-L-methionine = 2-methyladenosine(2503) in 23S rRNA + 5'-deoxyadenosine + L-methionine + 2 oxidized [2Fe-2S]-[ferredoxin] + S-adenosyl-L-homocysteine. It catalyses the reaction adenosine(37) in tRNA + 2 reduced [2Fe-2S]-[ferredoxin] + 2 S-adenosyl-L-methionine = 2-methyladenosine(37) in tRNA + 5'-deoxyadenosine + L-methionine + 2 oxidized [2Fe-2S]-[ferredoxin] + S-adenosyl-L-homocysteine. In terms of biological role, specifically methylates position 2 of adenine 2503 in 23S rRNA and position 2 of adenine 37 in tRNAs. In Mycobacterium sp. (strain JLS), this protein is Probable dual-specificity RNA methyltransferase RlmN.